The chain runs to 407 residues: Methylthioribose kinase (407 aa).

ATP contacts are provided by residues N40, K57, and 111 to 113 (EDL). D229 contributes to the substrate binding site. 246–248 (DAE) lines the ATP pocket. Position 344 (R344) interacts with substrate.

It belongs to the methylthioribose kinase family. As to quaternary structure, homodimer.

It carries out the reaction 5-(methylsulfanyl)-D-ribose + ATP = 5-(methylsulfanyl)-alpha-D-ribose 1-phosphate + ADP + H(+). It functions in the pathway amino-acid biosynthesis; L-methionine biosynthesis via salvage pathway; S-methyl-5-thio-alpha-D-ribose 1-phosphate from S-methyl-5'-thioadenosine (hydrolase route): step 2/2. Catalyzes the phosphorylation of methylthioribose into methylthioribose-1-phosphate. This is Methylthioribose kinase from Yersinia pseudotuberculosis serotype IB (strain PB1/+).